We begin with the raw amino-acid sequence, 218 residues long: Adenylate kinase (218 aa).

Position 10-15 (10-15 (GAGKGT)) interacts with ATP. Residues 30–59 (STGDMLRAAIAKGTPLGLSAQKIMESGGLV) are NMP. Residues Thr31, Arg36, 57-59 (GLV), 85-88 (GFPR), and Gln92 contribute to the AMP site. Positions 122 to 159 (GRRIHQPSGRVYHVVNQPPKNPGVDDITGEPLIQRDDD) are LID. ATP contacts are provided by residues Arg123 and 132–133 (VY). Residues Arg156 and Arg167 each coordinate AMP. Gly203 contacts ATP.

The protein belongs to the adenylate kinase family. Monomer.

Its subcellular location is the cytoplasm. The enzyme catalyses AMP + ATP = 2 ADP. Its pathway is purine metabolism; AMP biosynthesis via salvage pathway; AMP from ADP: step 1/1. In terms of biological role, catalyzes the reversible transfer of the terminal phosphate group between ATP and AMP. Plays an important role in cellular energy homeostasis and in adenine nucleotide metabolism. This is Adenylate kinase from Legionella pneumophila (strain Lens).